The sequence spans 594 residues: Lipolysis-stimulated lipoprotein receptor (594 aa).

The first 35 residues, 1 to 35 (MAPAASACAGAPGSHPATTIFVCLFLIIYCPDRAS), serve as a signal peptide directing secretion. Over 36-206 (AIQVTVPDPY…PGFRAGPLED (171 aa)) the chain is Extracellular. The region spanning 89-181 (PASVDNQLNA…DLDGNNEAYA (93 aa)) is the Ig-like V-type domain. The cysteines at positions 113 and 165 are disulfide-linked. The chain crosses the membrane as a helical span at residues 207–227 (WLFVVVVCLASLLFFLLLGIC). The Cytoplasmic portion of the chain corresponds to 228-594 (WCQCCPHTCC…LALSRESLVV (367 aa)). Thr-283 carries the phosphothreonine modification. Ser-308 carries the phosphoserine; by MAPK8 and MAPK9 modification. Phosphoserine occurs at positions 314, 332, 375, and 379. Positions 375-387 (SEVTSLHEDDWRS) are enriched in basic and acidic residues. The tract at residues 375-594 (SEVTSLHEDD…LALSRESLVV (220 aa)) is disordered. Position 396 is a phosphothreonine (Thr-396). Residues Ser-407, Ser-410, and Ser-436 each carry the phosphoserine modification. Positions 435–444 (RSVDALDDIN) are enriched in basic and acidic residues. Residues 445–460 (RPGSTESGRSSPPSSG) are compositionally biased toward low complexity. Phosphoserine is present on residues Ser-471 and Ser-473. Residues 472-550 (RSRDDLYDPD…GAGERRRVYR (79 aa)) are compositionally biased toward basic and acidic residues. Tyr-478 is modified (phosphotyrosine). Ser-576 carries the post-translational modification Phosphoserine. Lys-583 is covalently cross-linked (Glycyl lysine isopeptide (Lys-Gly) (interchain with G-Cter in ubiquitin)). Phosphoserine occurs at positions 588 and 591.

This sequence belongs to the immunoglobulin superfamily. LISCH7 family. In terms of assembly, homotrimer or homotetramer. Assembles into cell-cell contacts. Interacts (via the cytoplasmic domain) with MARVELD2 (via C-terminal cytoplasmic domain); the interaction is required to recruit MARVELD2 to tricellular contacts. Interacts with OCLN. In terms of processing, phosphorylation at Ser-308 by MAPK8/JNK1 and MAPK9/JNK2 may be required for exclusive localization at tricellular tight junstions. Post-translationally, polyubiquitinated at Lys-583 via 'Lys-63'-linked ubiquitin chains; deubiquitinated by USP53. As to expression, expressed in epithelial tissues (at protein level). Specifically expressed in liver and to a lower extent in kidney (at protein level). Also detected in brain, testis, ovaries, adrenal gland, intestine, muscle, and lung. In colon, only expressed in the lower portion of crypts. Expressed in the liver. In terms of tissue distribution, expressed in liver, stomach, small intestine and colon. Also detected in other epithelial tissues.

The protein localises to the cell membrane. It is found in the cell junction. The protein resides in the tight junction. Probable role in the clearance of triglyceride-rich lipoprotein from blood. Binds chylomicrons, LDL and VLDL in presence of free fatty acids and allows their subsequent uptake in the cells. Maintains epithelial barrier function by recruiting MARVELD2/tricellulin to tricellular tight junctions. The polypeptide is Lipolysis-stimulated lipoprotein receptor (Mus musculus (Mouse)).